A 266-amino-acid chain; its full sequence is Phosphatidylglycerol--prolipoprotein diacylglyceryl transferase (266 aa).

The next 7 membrane-spanning stretches (helical) occupy residues 10–30 (VAIALGPLKIHWYGLMYLVGI), 56–76 (LVFWVAMGVILGGRLGYVFFY), 92–112 (WEGGMSFHGGLIGVMLATWWF), 120–140 (FFELMDFIAPLVPIGLGAGRI), 172–192 (PSQLYQFALEGVALFTILWFY), 200–220 (MAVSGMFAACYGVFRFIVEFV), and 234–254 (WLTMGQILCLPMILGGIGLIA). Arginine 139 is a binding site for a 1,2-diacyl-sn-glycero-3-phospho-(1'-sn-glycerol).

This sequence belongs to the Lgt family.

The protein localises to the cell inner membrane. It catalyses the reaction L-cysteinyl-[prolipoprotein] + a 1,2-diacyl-sn-glycero-3-phospho-(1'-sn-glycerol) = an S-1,2-diacyl-sn-glyceryl-L-cysteinyl-[prolipoprotein] + sn-glycerol 1-phosphate + H(+). It functions in the pathway protein modification; lipoprotein biosynthesis (diacylglyceryl transfer). Functionally, catalyzes the transfer of the diacylglyceryl group from phosphatidylglycerol to the sulfhydryl group of the N-terminal cysteine of a prolipoprotein, the first step in the formation of mature lipoproteins. In Ectopseudomonas mendocina (strain ymp) (Pseudomonas mendocina), this protein is Phosphatidylglycerol--prolipoprotein diacylglyceryl transferase.